A 188-amino-acid chain; its full sequence is Ion-translocating oxidoreductase complex subunit B (188 aa).

Residues 1 to 23 form a hydrophobic region; sequence MFTAIWVMVGLAIAIGLILGWSA. The region spanning 29-88 is the 4Fe-4S domain; that stretch reads EGNPLAEKIDAILPQTQCGQCGFPGCRPYAEAIAKGEADINQCPPGGEEGVKKLAELLGV. Positions 46, 49, 54, 71, 113, 116, 119, 123, 143, 146, 149, and 153 each coordinate [4Fe-4S] cluster. 4Fe-4S ferredoxin-type domains lie at 104–133 and 134–163; these read SVAFIDEQTCIGCTLCIQACPVDAISGAAK and QMHTIIADECTGCELCLAPCPVDCISMVPI.

Belongs to the 4Fe4S bacterial-type ferredoxin family. RnfB subfamily. As to quaternary structure, the complex is composed of six subunits: RnfA, RnfB, RnfC, RnfD, RnfE and RnfG. It depends on [4Fe-4S] cluster as a cofactor.

The protein resides in the cell inner membrane. Part of a membrane-bound complex that couples electron transfer with translocation of ions across the membrane. In Thiobacillus denitrificans (strain ATCC 25259 / T1), this protein is Ion-translocating oxidoreductase complex subunit B.